Here is a 415-residue protein sequence, read N- to C-terminus: Gamma-glutamyl phosphate reductase (415 aa).

It belongs to the gamma-glutamyl phosphate reductase family.

The protein localises to the cytoplasm. The enzyme catalyses L-glutamate 5-semialdehyde + phosphate + NADP(+) = L-glutamyl 5-phosphate + NADPH + H(+). Its pathway is amino-acid biosynthesis; L-proline biosynthesis; L-glutamate 5-semialdehyde from L-glutamate: step 2/2. Its function is as follows. Catalyzes the NADPH-dependent reduction of L-glutamate 5-phosphate into L-glutamate 5-semialdehyde and phosphate. The product spontaneously undergoes cyclization to form 1-pyrroline-5-carboxylate. The protein is Gamma-glutamyl phosphate reductase of Xylella fastidiosa (strain 9a5c).